A 216-amino-acid chain; its full sequence is Ribosomal RNA small subunit methyltransferase G (216 aa).

Residues glycine 83, methionine 88, 134 to 135 (VE), and arginine 149 contribute to the S-adenosyl-L-methionine site.

This sequence belongs to the methyltransferase superfamily. RNA methyltransferase RsmG family.

It is found in the cytoplasm. It catalyses the reaction guanosine(527) in 16S rRNA + S-adenosyl-L-methionine = N(7)-methylguanosine(527) in 16S rRNA + S-adenosyl-L-homocysteine. Its function is as follows. Specifically methylates the N7 position of guanine in position 527 of 16S rRNA. In Pseudomonas putida (strain GB-1), this protein is Ribosomal RNA small subunit methyltransferase G.